The sequence spans 251 residues: PF03932 family protein CutC (251 aa).

The protein belongs to the CutC family.

The protein localises to the cytoplasm. In Erwinia tasmaniensis (strain DSM 17950 / CFBP 7177 / CIP 109463 / NCPPB 4357 / Et1/99), this protein is PF03932 family protein CutC.